The following is a 412-amino-acid chain: Putative potassium channel protein RPA4233 (412 aa).

Transmembrane regions (helical) follow at residues 35 to 55, 65 to 85, 164 to 184, 202 to 222, and 225 to 245; these read FIVF…VPAM, ALEL…IWIA, LMAC…AMHI, WWAI…ATGI, and MVAS…VGIV. The Selectivity filter signature appears at 210–215; that stretch reads TIGYGD. 270 to 388 provides a ligand contact to a nucleoside 3',5'-cyclic phosphate; the sequence is LFSHLTAGDI…RKINQIVEGR (119 aa).

The protein belongs to the potassium channel family.

The protein localises to the cell membrane. This is Putative potassium channel protein RPA4233 from Rhodopseudomonas palustris (strain ATCC BAA-98 / CGA009).